Here is a 293-residue protein sequence, read N- to C-terminus: Glycine--tRNA ligase alpha subunit (293 aa).

Belongs to the class-II aminoacyl-tRNA synthetase family. Tetramer of two alpha and two beta subunits.

The protein localises to the cytoplasm. It catalyses the reaction tRNA(Gly) + glycine + ATP = glycyl-tRNA(Gly) + AMP + diphosphate. This is Glycine--tRNA ligase alpha subunit from Prochlorococcus marinus (strain MIT 9211).